Consider the following 279-residue polypeptide: Energy-coupling factor transporter ATP-binding protein EcfA1 (279 aa).

Residues 5–240 (IELKKVTFNY…GDELLQLGLD (236 aa)) form the ABC transporter domain. 40–47 (GHNGSGKS) lines the ATP pocket.

This sequence belongs to the ABC transporter superfamily. Energy-coupling factor EcfA family. As to quaternary structure, forms a stable energy-coupling factor (ECF) transporter complex composed of 2 membrane-embedded substrate-binding proteins (S component), 2 ATP-binding proteins (A component) and 2 transmembrane proteins (T component).

It is found in the cell membrane. Its function is as follows. ATP-binding (A) component of a common energy-coupling factor (ECF) ABC-transporter complex. Unlike classic ABC transporters this ECF transporter provides the energy necessary to transport a number of different substrates. This Streptococcus pyogenes serotype M28 (strain MGAS6180) protein is Energy-coupling factor transporter ATP-binding protein EcfA1.